A 447-amino-acid chain; its full sequence is Tryptophan synthase beta chain (447 aa).

An N6-(pyridoxal phosphate)lysine modification is found at K92. The disordered stretch occupies residues 408–447; that stretch reads GLAVKGGEQPKEFSDGPPLGKLAPSGGSAVREATSVGARK.

Belongs to the TrpB family. As to quaternary structure, tetramer of two alpha and two beta chains. The cofactor is pyridoxal 5'-phosphate.

The enzyme catalyses (1S,2R)-1-C-(indol-3-yl)glycerol 3-phosphate + L-serine = D-glyceraldehyde 3-phosphate + L-tryptophan + H2O. It participates in amino-acid biosynthesis; L-tryptophan biosynthesis; L-tryptophan from chorismate: step 5/5. Functionally, the beta subunit is responsible for the synthesis of L-tryptophan from indole and L-serine. This Polaromonas sp. (strain JS666 / ATCC BAA-500) protein is Tryptophan synthase beta chain.